A 633-amino-acid polypeptide reads, in one-letter code: Phosphomethylpyrimidine synthase (633 aa).

Substrate contacts are provided by residues Asn-245, Met-274, Tyr-303, His-339, 359-361 (SRG), 400-403 (DGLR), and Glu-439. His-443 contributes to the Zn(2+) binding site. A substrate-binding site is contributed by Tyr-466. His-507 contributes to the Zn(2+) binding site. Residues Cys-587, Cys-590, and Cys-595 each coordinate [4Fe-4S] cluster.

This sequence belongs to the ThiC family. Homodimer. The cofactor is [4Fe-4S] cluster.

The catalysed reaction is 5-amino-1-(5-phospho-beta-D-ribosyl)imidazole + S-adenosyl-L-methionine = 4-amino-2-methyl-5-(phosphooxymethyl)pyrimidine + CO + 5'-deoxyadenosine + formate + L-methionine + 3 H(+). The protein operates within cofactor biosynthesis; thiamine diphosphate biosynthesis. In terms of biological role, catalyzes the synthesis of the hydroxymethylpyrimidine phosphate (HMP-P) moiety of thiamine from aminoimidazole ribotide (AIR) in a radical S-adenosyl-L-methionine (SAM)-dependent reaction. The sequence is that of Phosphomethylpyrimidine synthase from Neisseria meningitidis serogroup B (strain ATCC BAA-335 / MC58).